A 298-amino-acid polypeptide reads, in one-letter code: Probable porphobilinogen deaminase (298 aa).

Position 241 is an S-(dipyrrolylmethanemethyl)cysteine (C241).

Belongs to the HMBS family. Dipyrromethane serves as cofactor.

It carries out the reaction 4 porphobilinogen + H2O = hydroxymethylbilane + 4 NH4(+). The protein operates within porphyrin-containing compound metabolism; protoporphyrin-IX biosynthesis; coproporphyrinogen-III from 5-aminolevulinate: step 2/4. In terms of biological role, tetrapolymerization of the monopyrrole PBG into the hydroxymethylbilane pre-uroporphyrinogen in several discrete steps. The polypeptide is Probable porphobilinogen deaminase (Methanopyrus kandleri (strain AV19 / DSM 6324 / JCM 9639 / NBRC 100938)).